We begin with the raw amino-acid sequence, 444 residues long: 23S rRNA (uracil(1939)-C(5))-methyltransferase RlmD (444 aa).

The TRAM domain maps to 11–70; it reads NSIKNHILKNIKVEKLDHRGRGLAYFQNKPLFIDGALAGELLEVQIVESKKRYSKGKIKK. 4 residues coordinate [4Fe-4S] cluster: Cys-83, Cys-89, Cys-92, and Cys-171. Residues Gln-277, Phe-306, Asn-311, Glu-327, Asp-354, and Asp-376 each coordinate S-adenosyl-L-methionine. Catalysis depends on Cys-402, which acts as the Nucleophile.

It belongs to the class I-like SAM-binding methyltransferase superfamily. RNA M5U methyltransferase family. RlmD subfamily.

The enzyme catalyses uridine(1939) in 23S rRNA + S-adenosyl-L-methionine = 5-methyluridine(1939) in 23S rRNA + S-adenosyl-L-homocysteine + H(+). Catalyzes the formation of 5-methyl-uridine at position 1939 (m5U1939) in 23S rRNA. This chain is 23S rRNA (uracil(1939)-C(5))-methyltransferase RlmD, found in Psychromonas ingrahamii (strain DSM 17664 / CCUG 51855 / 37).